Reading from the N-terminus, the 662-residue chain is Protein associated with UVRAG as autophagy enhancer (662 aa).

Disordered regions lie at residues 1-34 (MVSQSTVRQDSPVEPWEGISDHSGIIDGSPRLLN) and 58-131 (DVQQ…SLSS). The span at 58–71 (DVQQQPQDLQSQVP) shows a compositional bias: low complexity. Residues 100 to 113 (AETTLSEDTTDSVG) show a composition bias toward polar residues. Low complexity predominate over residues 114–131 (SASPHGSSEKSSSFSLSS). Phosphoserine; by MTOR is present on Ser157. Residues 196–235 (EVFVLPVDVEKENAHFYVADMIISAMEKMKCNILSQQQTE) form an interaction with UVRAG region. N6-acetyllysine is present on residues Lys483, Lys523, Lys533, Lys573, and Lys633.

In terms of assembly, interacts with UVRAG; the interaction is direct and promotes association with the PI3K/PI3KC3 and HOPS complexes. Interacts with STX17. Phosphorylated by MTOR at Ser-157 under nutrient-rich conditions. Phosphorylation prevents acetylation by KAT5/TIP60 and impairs RUBCNL/PACER function and autophagosome maturation. Under autophagy induction, Phosphorylation by MTOR is repressed, enabling acetylation by KAT5/TIP60. In terms of processing, acetylated by KAT5/TIP60 under autophagy induction, promoting autophagosome maturation and lipid metabolism. Acetylation is prevented by phosphorylation by MTOR. Lys-483 and Lys-573 constitute the key sites for tuning function in autophagy. Expressed weakly in cervical carcinoma cell lines.

It localises to the cytoplasmic vesicle. The protein localises to the autophagosome membrane. In terms of biological role, regulator of autophagy that promotes autophagosome maturation by facilitating the biogenesis of phosphatidylinositol 3-phosphate (PtdIns(3)P) in late steps of autophagy. Acts by antagonizing RUBCN, thereby stimulating phosphatidylinositol 3-kinase activity of the PI3K/PI3KC3 complex. Following anchorage to the autophagosomal SNARE STX17, promotes the recruitment of PI3K/PI3KC3 and HOPS complexes to the autophagosome to regulate the fusion specificity of autophagosomes with late endosomes/lysosomes. Binds phosphoinositides phosphatidylinositol 3-phosphate (PtdIns(3)P), 4-phosphate (PtdIns(4)P) and 5-phosphate (PtdIns(5)P). In addition to its role in autophagy, acts as a regulator of lipid and glycogen homeostasis. May act as a tumor suppressor. The polypeptide is Protein associated with UVRAG as autophagy enhancer (Homo sapiens (Human)).